The sequence spans 842 residues: Oleate activated transcription factor 3 (842 aa).

The zn(2)-C6 fungal-type DNA-binding region spans 22–50; the sequence is CTNCKRRKSKCDRQNPCSNCVRFGNKDTC. Residues 55–101 form a disordered region; the sequence is NPKNTESQHGEDTDNKVKKQQPQMIKGKRNGTSSSIVGSKASSISPT. Basic and acidic residues predominate over residues 60–71; sequence ESQHGEDTDNKV. A compositionally biased stretch (low complexity) spans 87–99; that stretch reads SSSIVGSKASSIS.

Belongs to the OAF3 family.

The protein localises to the cytoplasm. It localises to the nucleus. Its subcellular location is the mitochondrion. In terms of biological role, transcriptional inhibitor with a significantly increased number of target genes in response to oleate. The chain is Oleate activated transcription factor 3 (OAF3) from Zygosaccharomyces rouxii (strain ATCC 2623 / CBS 732 / NBRC 1130 / NCYC 568 / NRRL Y-229).